Consider the following 103-residue polypeptide: Large ribosomal subunit protein uL24 (103 aa).

The protein belongs to the universal ribosomal protein uL24 family. As to quaternary structure, part of the 50S ribosomal subunit.

Its function is as follows. One of two assembly initiator proteins, it binds directly to the 5'-end of the 23S rRNA, where it nucleates assembly of the 50S subunit. One of the proteins that surrounds the polypeptide exit tunnel on the outside of the subunit. The chain is Large ribosomal subunit protein uL24 from Exiguobacterium sibiricum (strain DSM 17290 / CCUG 55495 / CIP 109462 / JCM 13490 / 255-15).